Here is a 275-residue protein sequence, read N- to C-terminus: NH(3)-dependent NAD(+) synthetase (275 aa).

50-57 (GISGGVDS) is an ATP binding site. A Mg(2+)-binding site is contributed by D56. Deamido-NAD(+) is bound at residue R147. T167 contributes to the ATP binding site. Position 172 (E172) interacts with Mg(2+). The deamido-NAD(+) site is built by K180 and D187. The ATP site is built by K196 and T218. 267–268 (HK) lines the deamido-NAD(+) pocket.

Belongs to the NAD synthetase family. Homodimer.

It catalyses the reaction deamido-NAD(+) + NH4(+) + ATP = AMP + diphosphate + NAD(+) + H(+). Its pathway is cofactor biosynthesis; NAD(+) biosynthesis; NAD(+) from deamido-NAD(+) (ammonia route): step 1/1. Catalyzes the ATP-dependent amidation of deamido-NAD to form NAD. Uses ammonia as a nitrogen source. This is NH(3)-dependent NAD(+) synthetase from Pseudomonas entomophila (strain L48).